A 196-amino-acid polypeptide reads, in one-letter code: Peptide deformylase (196 aa).

Positions 103 and 145 each coordinate Fe cation. The active site involves glutamate 146. A Fe cation-binding site is contributed by histidine 149.

Belongs to the polypeptide deformylase family. Requires Fe(2+) as cofactor.

It carries out the reaction N-terminal N-formyl-L-methionyl-[peptide] + H2O = N-terminal L-methionyl-[peptide] + formate. In terms of biological role, removes the formyl group from the N-terminal Met of newly synthesized proteins. Requires at least a dipeptide for an efficient rate of reaction. N-terminal L-methionine is a prerequisite for activity but the enzyme has broad specificity at other positions. The chain is Peptide deformylase from Rhodococcus opacus (strain B4).